The primary structure comprises 254 residues: DNA repair protein RecO (254 aa).

This sequence belongs to the RecO family.

Involved in DNA repair and RecF pathway recombination. This is DNA repair protein RecO from Verminephrobacter eiseniae (strain EF01-2).